Reading from the N-terminus, the 396-residue chain is Putative pyridoxal phosphate-dependent acyltransferase (396 aa).

A pyridoxal 5'-phosphate-binding site is contributed by 111 to 112 (GF). Substrate is bound at residue His-136. Residues Ser-186, 211 to 214 (DDAH), and 241 to 244 (TLSK) each bind pyridoxal 5'-phosphate. Lys-244 carries the N6-(pyridoxal phosphate)lysine modification. Thr-358 is a substrate binding site.

The protein belongs to the class-II pyridoxal-phosphate-dependent aminotransferase family. Homodimer. Pyridoxal 5'-phosphate serves as cofactor.

This Bacillus anthracis protein is Putative pyridoxal phosphate-dependent acyltransferase.